Consider the following 584-residue polypeptide: Actin-binding protein IPP (584 aa).

The BTB domain maps to 37 to 104 (CDVQLQVGQE…IYTGIVNIGV (68 aa)). 6 Kelch repeats span residues 289–343 (YLYA…VLGG), 344–390 (MVYA…VCYG), 391–437 (AIYA…EMQG), 439–485 (IYVI…ALND), 487–533 (IYSV…AVNG), and 535–583 (LYVS…GVAV).

It is found in the cytoplasm. It localises to the cytoskeleton. Its function is as follows. May play a role in organizing the actin cytoskeleton. This chain is Actin-binding protein IPP (IPP), found in Homo sapiens (Human).